We begin with the raw amino-acid sequence, 580 residues long: Acyl-coenzyme A synthetase ACSM4, mitochondrial (580 aa).

The N-terminal 22 residues, 1–22 (MKIFFRYQTFRFIWLTKPPGRR), are a transit peptide targeting the mitochondrion. ATP is bound by residues 229–237 (TSGTTGFPK), 368–373 (EGYGQT), D455, R470, and K566.

The protein belongs to the ATP-dependent AMP-binding enzyme family. The cofactor is Mg(2+). Requires Mn(2+) as cofactor.

The protein localises to the mitochondrion. The enzyme catalyses a medium-chain fatty acid + ATP + CoA = a medium-chain fatty acyl-CoA + AMP + diphosphate. It catalyses the reaction hexanoate + ATP + CoA = hexanoyl-CoA + AMP + diphosphate. The catalysed reaction is octanoate + ATP + CoA = octanoyl-CoA + AMP + diphosphate. It carries out the reaction decanoate + ATP + CoA = decanoyl-CoA + AMP + diphosphate. The enzyme catalyses dodecanoate + ATP + CoA = dodecanoyl-CoA + AMP + diphosphate. Its function is as follows. Catalyzes the activation of fatty acids by CoA to produce an acyl-CoA, the first step in fatty acid metabolism. Capable of activating medium-chain fatty acids with a preference for C6-12 fatty acids. The chain is Acyl-coenzyme A synthetase ACSM4, mitochondrial (ACSM4) from Homo sapiens (Human).